Here is an 86-residue protein sequence, read N- to C-terminus: Cell division topological specificity factor (86 aa).

This sequence belongs to the MinE family.

In terms of biological role, prevents the cell division inhibition by proteins MinC and MinD at internal division sites while permitting inhibition at polar sites. This ensures cell division at the proper site by restricting the formation of a division septum at the midpoint of the long axis of the cell. The chain is Cell division topological specificity factor from Rhizobium rhizogenes (strain K84 / ATCC BAA-868) (Agrobacterium radiobacter).